The sequence spans 153 residues: UPF0768 protein PB2B2.18 (153 aa).

Belongs to the UPF0768 family.

This Schizosaccharomyces pombe (strain 972 / ATCC 24843) (Fission yeast) protein is UPF0768 protein PB2B2.18.